Here is a 246-residue protein sequence, read N- to C-terminus: tRNA (guanine-N(1)-)-methyltransferase (246 aa).

S-adenosyl-L-methionine contacts are provided by residues Gly-113 and 133–138; that span reads IGDFVM.

The protein belongs to the RNA methyltransferase TrmD family. Homodimer.

The protein localises to the cytoplasm. It carries out the reaction guanosine(37) in tRNA + S-adenosyl-L-methionine = N(1)-methylguanosine(37) in tRNA + S-adenosyl-L-homocysteine + H(+). Specifically methylates guanosine-37 in various tRNAs. The sequence is that of tRNA (guanine-N(1)-)-methyltransferase from Vibrio atlanticus (strain LGP32) (Vibrio splendidus (strain Mel32)).